Here is a 251-residue protein sequence, read N- to C-terminus: 5'-nucleotidase SurE (251 aa).

Positions 8, 9, 40, and 95 each coordinate a divalent metal cation.

Belongs to the SurE nucleotidase family. A divalent metal cation serves as cofactor.

The protein localises to the cytoplasm. It carries out the reaction a ribonucleoside 5'-phosphate + H2O = a ribonucleoside + phosphate. Its function is as follows. Nucleotidase that shows phosphatase activity on nucleoside 5'-monophosphates. This is 5'-nucleotidase SurE from Lawsonia intracellularis (strain PHE/MN1-00).